Reading from the N-terminus, the 407-residue chain is Arginine biosynthesis bifunctional protein ArgJ (407 aa).

Positions 169, 192, 203, 283, 402, and 407 each coordinate substrate. The Nucleophile role is filled by T203.

The protein belongs to the ArgJ family. As to quaternary structure, heterotetramer of two alpha and two beta chains.

The protein localises to the cytoplasm. The catalysed reaction is N(2)-acetyl-L-ornithine + L-glutamate = N-acetyl-L-glutamate + L-ornithine. It carries out the reaction L-glutamate + acetyl-CoA = N-acetyl-L-glutamate + CoA + H(+). Its pathway is amino-acid biosynthesis; L-arginine biosynthesis; L-ornithine and N-acetyl-L-glutamate from L-glutamate and N(2)-acetyl-L-ornithine (cyclic): step 1/1. It functions in the pathway amino-acid biosynthesis; L-arginine biosynthesis; N(2)-acetyl-L-ornithine from L-glutamate: step 1/4. Functionally, catalyzes two activities which are involved in the cyclic version of arginine biosynthesis: the synthesis of N-acetylglutamate from glutamate and acetyl-CoA as the acetyl donor, and of ornithine by transacetylation between N(2)-acetylornithine and glutamate. The chain is Arginine biosynthesis bifunctional protein ArgJ from Mycobacterium leprae (strain TN).